Here is a 392-residue protein sequence, read N- to C-terminus: Heat-inducible transcription repressor HrcA (392 aa).

The protein belongs to the HrcA family.

Negative regulator of class I heat shock genes (grpE-dnaK-dnaJ and groELS operons). Prevents heat-shock induction of these operons. In Chlamydia trachomatis serovar L2 (strain ATCC VR-902B / DSM 19102 / 434/Bu), this protein is Heat-inducible transcription repressor HrcA.